Reading from the N-terminus, the 608-residue chain is Probable potassium transport system protein Kup (608 aa).

12 helical membrane-spanning segments follow: residues Leu9–Leu29, Pro46–Val66, Thr99–Ile119, Pro137–Ile157, Val165–Leu185, Thr213–Ala233, Trp247–Leu267, Ala285–Ile305, Ile337–Phe357, Leu363–Cys383, Leu396–Leu416, and Ile419–Ser439.

Belongs to the HAK/KUP transporter (TC 2.A.72) family.

The protein resides in the cell inner membrane. The enzyme catalyses K(+)(in) + H(+)(in) = K(+)(out) + H(+)(out). Transport of potassium into the cell. Likely operates as a K(+):H(+) symporter. The chain is Probable potassium transport system protein Kup from Aeromonas salmonicida (strain A449).